We begin with the raw amino-acid sequence, 451 residues long: Glyceraldehyde-3-phosphate dehydrogenase B, chloroplastic (451 aa).

Positions 1 to 25 are disordered; it reads MATHAALASTRIPTNTRFPSKTSHS. The transit peptide at 1–84 directs the protein to the chloroplast; sequence MATHAALAST…STAVKGVTVA (84 aa). Over residues 11-25 the composition is skewed to polar residues; sequence RIPTNTRFPSKTSHS. NADP(+)-binding positions include 95–96, aspartate 119, and arginine 164; that span reads RI. Residues 238–240, threonine 269, arginine 284, 297–298, and arginine 320 each bind D-glyceraldehyde 3-phosphate; these read SCT and TG. Cysteine 239 functions as the Nucleophile in the catalytic mechanism. Asparagine 403 lines the NADP(+) pocket.

It belongs to the glyceraldehyde-3-phosphate dehydrogenase family. Tetramer of either four A chains (GAPDH 2) or two A and two B chains (GAPDH 1).

The protein localises to the plastid. Its subcellular location is the chloroplast. It catalyses the reaction D-glyceraldehyde 3-phosphate + phosphate + NADP(+) = (2R)-3-phospho-glyceroyl phosphate + NADPH + H(+). It functions in the pathway carbohydrate biosynthesis; Calvin cycle. This chain is Glyceraldehyde-3-phosphate dehydrogenase B, chloroplastic (GAPB), found in Pisum sativum (Garden pea).